A 187-amino-acid chain; its full sequence is Protein GrpE (187 aa).

Positions Met1–Asn30 are disordered.

The protein belongs to the GrpE family. In terms of assembly, homodimer.

The protein localises to the cytoplasm. Functionally, participates actively in the response to hyperosmotic and heat shock by preventing the aggregation of stress-denatured proteins, in association with DnaK and GrpE. It is the nucleotide exchange factor for DnaK and may function as a thermosensor. Unfolded proteins bind initially to DnaJ; upon interaction with the DnaJ-bound protein, DnaK hydrolyzes its bound ATP, resulting in the formation of a stable complex. GrpE releases ADP from DnaK; ATP binding to DnaK triggers the release of the substrate protein, thus completing the reaction cycle. Several rounds of ATP-dependent interactions between DnaJ, DnaK and GrpE are required for fully efficient folding. The chain is Protein GrpE from Borreliella afzelii (strain PKo) (Borrelia afzelii).